Consider the following 456-residue polypeptide: MICGSKTKSYLKSQNLKILGQGKLNGIVEISGAKNSALVLLASSLLTNEKIILENVPFLTDIEKMGNILKNLGVNLVRKNNQLEIDPTTISIKELPYELVKGLRASFFCIGALLTKFGEAQVPLPGGCNIGSRPIEEHINGLIALGAEIIIEKGIVKAKIRGNKNRLHGTHIKLNCPSVGATETLIMAASLAKGRTTIENAAREPEVQDLCQMLNKMGAKIYDSGKETIIIDGVNKLGGCTHKVIPDRIEAGTFLIAAAATSSSITISPVIPHHLEAVTNKLQESGSKITIKGNSISIKSKEIKGVDIETAPFPGFPTDLQAPFTTLMTIANGESKITETIFENRMNHIYLLNEMGASIKLNKNVAHIKGVKTINGMNLVGSDLRSSAALIIAGIIAKGSSNFYGLEHLDRGYENFELKLKNLGVKIIREISKNTFEENGYKIESKSENLSKLGAA.

34–35 (KN) serves as a coordination point for phosphoenolpyruvate. Arg104 provides a ligand contact to UDP-N-acetyl-alpha-D-glucosamine. Cys128 serves as the catalytic Proton donor. Cys128 bears the 2-(S-cysteinyl)pyruvic acid O-phosphothioketal mark. The UDP-N-acetyl-alpha-D-glucosamine site is built by Asp319 and Ile341.

This sequence belongs to the EPSP synthase family. MurA subfamily.

It is found in the cytoplasm. The catalysed reaction is phosphoenolpyruvate + UDP-N-acetyl-alpha-D-glucosamine = UDP-N-acetyl-3-O-(1-carboxyvinyl)-alpha-D-glucosamine + phosphate. It participates in cell wall biogenesis; peptidoglycan biosynthesis. In terms of biological role, cell wall formation. Adds enolpyruvyl to UDP-N-acetylglucosamine. The protein is UDP-N-acetylglucosamine 1-carboxyvinyltransferase of Prochlorococcus marinus (strain AS9601).